A 124-amino-acid polypeptide reads, in one-letter code: Large ribosomal subunit protein eL33 (124 aa).

Ala-2 bears the N-acetylalanine mark.

Belongs to the eukaryotic ribosomal protein eL33 family.

The protein is Large ribosomal subunit protein eL33 of Caenorhabditis elegans.